We begin with the raw amino-acid sequence, 451 residues long: MDPHGTCGGSNVPAFLAKLWTLVEDPDTDPLICWSPEGNSFHVFDQGQFAKEVLPKYFKHNNMASFVRQLNMYGFRKVVHIEQGGLVKPERDDTEFQHPYFIRGQEQLLENIKRKVNTMSATKSDEVKVRQDSVGKLISDVQSMKGKQESIDGRLLSMKHENEALWREVASLRQKHTQQQKVVNKLIQFLVSLVQSNRILGVKRKIPLMLNDSSTGHSPPKYSRQYSLEHVPSSTSYPVSGFTDSSAGPIISDVTELPESSPSPSPCPSLEASPSPVILIKTEPLTPSQSPEQSPAPPKLDDTPISPSTFIDSILLETETSVCPGGNKNDEMSESHPPEPCLSVACLDNISLSRQMSEVSRLFPTSCSSVPGRAEPPGLDMAVAELNDHVDNIDFNLDTLQNLLNGQSFSVDTSALMDLFSPSLGIPDLSLPDPDSSLASVSSTPIYTCVV.

Residues 12–117 (VPAFLAKLWT…LLENIKRKVN (106 aa)) mediate DNA binding. 2 disordered regions span residues 210–273 (LNDS…LEAS) and 285–307 (LTPSQSPEQSPAPPKLDDTPISP). A compositionally biased stretch (polar residues) spans 232-246 (PSSTSYPVSGFTDSS).

It belongs to the HSF family. Homotrimer. In terms of processing, exhibits temperature-dependent phosphorylation.

It localises to the nucleus. DNA-binding protein that specifically binds heat shock promoter elements (HSE) and activates transcription. In Xenopus laevis (African clawed frog), this protein is Heat shock factor protein (hsf1).